A 317-amino-acid chain; its full sequence is tRNA(Ile)-lysidine synthase (317 aa).

32-37 (SGGVDS) contacts ATP.

It belongs to the tRNA(Ile)-lysidine synthase family.

The protein localises to the cytoplasm. The catalysed reaction is cytidine(34) in tRNA(Ile2) + L-lysine + ATP = lysidine(34) in tRNA(Ile2) + AMP + diphosphate + H(+). In terms of biological role, ligates lysine onto the cytidine present at position 34 of the AUA codon-specific tRNA(Ile) that contains the anticodon CAU, in an ATP-dependent manner. Cytidine is converted to lysidine, thus changing the amino acid specificity of the tRNA from methionine to isoleucine. The protein is tRNA(Ile)-lysidine synthase of Aquifex aeolicus (strain VF5).